Here is a 383-residue protein sequence, read N- to C-terminus: MRFLTAGESHGPELLAIIEGLPAGLPLSEEDINPWLEKRQKGYGRGRRMVIERDRVEFRAGVRGGRTTGAPVALAIKNADFKNWAEIMDPAPGNWPRKRALTAARPGHADLAGGMKYGHKDLRDVLERASARETAMRVAVGAVALKLLSLLGVEGVGYVPGMAGVWAKVPFSWDLVPRIEESPLRMTDPEAEAEAIRRIDQAKAEGDTLGGIIEARFRGLVPGLGSHVHWDRKLDGRLAQMALSIPAVKGVEIGPAFENAMKRGSEVHDAIYWSPERGFYRETNRAGGLEGGMTTGEELVVRAALKPIATLMKPLPTVDVVTHEPKDAARERSDTTAVPAASVILCALSAIVLAQAYLEKFGGDTMEEIQERVERYRERVRAY.

Residues Arg39 and Arg45 each coordinate NADP(+). Residues 128 to 130 (RAS), Gly291, 306 to 310 (KPIAT), and Arg332 contribute to the FMN site.

This sequence belongs to the chorismate synthase family. In terms of assembly, homotetramer. FMNH2 is required as a cofactor.

The enzyme catalyses 5-O-(1-carboxyvinyl)-3-phosphoshikimate = chorismate + phosphate. The protein operates within metabolic intermediate biosynthesis; chorismate biosynthesis; chorismate from D-erythrose 4-phosphate and phosphoenolpyruvate: step 7/7. Catalyzes the anti-1,4-elimination of the C-3 phosphate and the C-6 proR hydrogen from 5-enolpyruvylshikimate-3-phosphate (EPSP) to yield chorismate, which is the branch point compound that serves as the starting substrate for the three terminal pathways of aromatic amino acid biosynthesis. This reaction introduces a second double bond into the aromatic ring system. The sequence is that of Chorismate synthase from Thermus thermophilus (strain ATCC BAA-163 / DSM 7039 / HB27).